The sequence spans 165 residues: Phosphopantetheine adenylyltransferase (165 aa).

Thr-9 provides a ligand contact to substrate. Residues 9–10 (TF) and His-17 contribute to the ATP site. Substrate-binding residues include Lys-41, Leu-78, and Arg-92. Residues 93–95 (GLR), Glu-103, and 128–134 (RQAIASK) each bind ATP.

Belongs to the bacterial CoaD family. Homohexamer. The cofactor is Mg(2+).

The protein localises to the cytoplasm. It carries out the reaction (R)-4'-phosphopantetheine + ATP + H(+) = 3'-dephospho-CoA + diphosphate. The protein operates within cofactor biosynthesis; coenzyme A biosynthesis; CoA from (R)-pantothenate: step 4/5. In terms of biological role, reversibly transfers an adenylyl group from ATP to 4'-phosphopantetheine, yielding dephospho-CoA (dPCoA) and pyrophosphate. This chain is Phosphopantetheine adenylyltransferase, found in Ruegeria pomeroyi (strain ATCC 700808 / DSM 15171 / DSS-3) (Silicibacter pomeroyi).